A 186-amino-acid chain; its full sequence is MGLKEDRWITDMALPHNMIEPFCENQVGKNVVSYGLSSYGYDIRVSNEFKIFTNINATVVDPKNFDEANVVDFIGDICIVPPNSFALARTVEYFRIPRDVLAICLGKSTYARCGIIVNVTPFEPEFEGHITIEISNTTPLPAKIYANEGIAQVLFLQGDADCEVSYKDKKGKYQKQEGITLPRILK.

DCTP is bound at residue lysine 107–arginine 112. Residue glutamate 133 is the Proton donor/acceptor of the active site. The dCTP site is built by glutamine 152, tyrosine 166, lysine 175, and glutamine 176.

The protein belongs to the dCTP deaminase family. As to quaternary structure, homotrimer.

It carries out the reaction dCTP + H2O + H(+) = dUTP + NH4(+). It participates in pyrimidine metabolism; dUMP biosynthesis; dUMP from dCTP (dUTP route): step 1/2. Functionally, catalyzes the deamination of dCTP to dUTP. This is dCTP deaminase from Wolinella succinogenes (strain ATCC 29543 / DSM 1740 / CCUG 13145 / JCM 31913 / LMG 7466 / NCTC 11488 / FDC 602W) (Vibrio succinogenes).